The sequence spans 343 residues: Ribosomal RNA-processing protein 8 (343 aa).

Residues 1-123 are disordered; the sequence is MGKKRKITDE…NDDVAAAPEE (123 aa). Positions 7–33 are enriched in basic and acidic residues; it reads ITDEKDAQHVPAEKREKVENWLKKSTE. Basic residues-rich tracts occupy residues 45 to 59 and 89 to 101; these read KKKR…KLAA and KKKR…KKKF. A compositionally biased stretch (acidic residues) spans 112 to 123; sequence TENDDVAAAPEE. Positions 169, 204, 224, 236, 237, and 253 each coordinate S-adenosyl-L-methionine.

This sequence belongs to the methyltransferase superfamily. RRP8 family.

It localises to the nucleus. It is found in the nucleolus. Functionally, probable methyltransferase required to silence rDNA. Involved in regulation of antisense ribosomal siRNA production. Required for the N1-methyladenosine modification of 26S rRNAs. This Caenorhabditis elegans protein is Ribosomal RNA-processing protein 8 (rrp-8).